A 403-amino-acid polypeptide reads, in one-letter code: Betaine--homocysteine S-methyltransferase 1 (403 aa).

In terms of domain architecture, Hcy-binding spans 8 to 311; sequence KGLLERLDAG…YHTRAIAEEL (304 aa). Residues Cys-214, Cys-296, and Cys-297 each contribute to the Zn(2+) site.

Homotetramer. The cofactor is Zn(2+).

The protein localises to the cytoplasm. The enzyme catalyses L-homocysteine + glycine betaine = N,N-dimethylglycine + L-methionine. It participates in amine and polyamine degradation; betaine degradation; sarcosine from betaine: step 1/2. Its pathway is amino-acid biosynthesis; L-methionine biosynthesis via de novo pathway; L-methionine from L-homocysteine (BhmT route): step 1/1. Its function is as follows. Involved in the regulation of homocysteine metabolism. Converts betaine and homocysteine to dimethylglycine and methionine, respectively. This reaction is also required for the irreversible oxidation of choline. The protein is Betaine--homocysteine S-methyltransferase 1 (bhmt) of Xenopus laevis (African clawed frog).